A 316-amino-acid chain; its full sequence is Putative transketolase C-terminal section (316 aa).

It belongs to the transketolase family. Thiamine diphosphate serves as cofactor.

It catalyses the reaction D-sedoheptulose 7-phosphate + D-glyceraldehyde 3-phosphate = aldehydo-D-ribose 5-phosphate + D-xylulose 5-phosphate. The sequence is that of Putative transketolase C-terminal section from Methanocaldococcus jannaschii (strain ATCC 43067 / DSM 2661 / JAL-1 / JCM 10045 / NBRC 100440) (Methanococcus jannaschii).